Here is a 63-residue protein sequence, read N- to C-terminus: Large ribosomal subunit protein bL28 (63 aa).

The protein belongs to the bacterial ribosomal protein bL28 family.

The sequence is that of Large ribosomal subunit protein bL28 from Desulfosudis oleivorans (strain DSM 6200 / JCM 39069 / Hxd3) (Desulfococcus oleovorans).